The following is a 620-amino-acid chain: mRNA cap guanine-N(7) methyltransferase (620 aa).

2 disordered regions span residues 1–176 and 193–304; these read MLPP…APSS and AHAN…DDEY. A compositionally biased stretch (polar residues) spans 29–44; the sequence is RSPSMSLSPRSQNQSL. 2 stretches are compositionally biased toward low complexity: residues 45-60 and 136-157; these read PYPS…SAHP and PQPT…TPHH. In terms of domain architecture, mRNA cap 0 methyltransferase spans 345–620; it reads SPIIGLKKFN…LYMGFAFEKM (276 aa). 354 to 355 serves as a coordination point for mRNA; it reads NN. Residues K358, G377, D399, D428, Q454, and Y459 each coordinate S-adenosyl-L-methionine.

This sequence belongs to the class I-like SAM-binding methyltransferase superfamily. mRNA cap 0 methyltransferase family.

It localises to the nucleus. It carries out the reaction a 5'-end (5'-triphosphoguanosine)-ribonucleoside in mRNA + S-adenosyl-L-methionine = a 5'-end (N(7)-methyl 5'-triphosphoguanosine)-ribonucleoside in mRNA + S-adenosyl-L-homocysteine. In terms of biological role, responsible for methylating the 5'-cap structure of mRNAs. The sequence is that of mRNA cap guanine-N(7) methyltransferase (ABD1) from Cryptococcus neoformans var. neoformans serotype D (strain JEC21 / ATCC MYA-565) (Filobasidiella neoformans).